The chain runs to 311 residues: Pyrimidine-specific ribonucleoside hydrolase RihA (311 aa).

Histidine 240 is an active-site residue.

This sequence belongs to the IUNH family. RihA subfamily.

Its function is as follows. Hydrolyzes cytidine or uridine to ribose and cytosine or uracil, respectively. This Salmonella paratyphi C (strain RKS4594) protein is Pyrimidine-specific ribonucleoside hydrolase RihA.